A 242-amino-acid chain; its full sequence is Endothelial protein C receptor (242 aa).

The N-terminal stretch at 1–17 (MLTKFLPLLLLLLPGCA) is a signal peptide. The Extracellular portion of the chain corresponds to 18-214 (LCNSDGSQSL…GSQTGRSYTS (197 aa)). Asn46, Asn63, Asn140, Asn166, and Asn176 each carry an N-linked (GlcNAc...) asparagine glycan. Disulfide bonds link Cys119–Cys190 and Cys223–Cys236. The helical transmembrane segment at 215-235 (LVLGILMGCFIIAGVAVGIFM) threads the bilayer. At 236–242 (CTSGRRC) the chain is on the cytoplasmic side.

As to expression, expressed in endothelial cells.

Its subcellular location is the membrane. Binds activated protein C. Enhances protein C activation by the thrombin-thrombomodulin complex; plays a role in the protein C pathway controlling blood coagulation. In Mus musculus (Mouse), this protein is Endothelial protein C receptor (Procr).